A 156-amino-acid chain; its full sequence is Small ribosomal subunit protein uS7 (156 aa).

The protein belongs to the universal ribosomal protein uS7 family. Part of the 30S ribosomal subunit. Contacts proteins S9 and S11.

Its function is as follows. One of the primary rRNA binding proteins, it binds directly to 16S rRNA where it nucleates assembly of the head domain of the 30S subunit. Is located at the subunit interface close to the decoding center, probably blocks exit of the E-site tRNA. This is Small ribosomal subunit protein uS7 from Azorhizobium caulinodans (strain ATCC 43989 / DSM 5975 / JCM 20966 / LMG 6465 / NBRC 14845 / NCIMB 13405 / ORS 571).